Here is a 285-residue protein sequence, read N- to C-terminus: 2-dehydro-3-deoxyphosphooctonate aldolase (285 aa).

It belongs to the KdsA family.

It is found in the cytoplasm. It carries out the reaction D-arabinose 5-phosphate + phosphoenolpyruvate + H2O = 3-deoxy-alpha-D-manno-2-octulosonate-8-phosphate + phosphate. It functions in the pathway carbohydrate biosynthesis; 3-deoxy-D-manno-octulosonate biosynthesis; 3-deoxy-D-manno-octulosonate from D-ribulose 5-phosphate: step 2/3. The protein operates within bacterial outer membrane biogenesis; lipopolysaccharide biosynthesis. In Polaromonas sp. (strain JS666 / ATCC BAA-500), this protein is 2-dehydro-3-deoxyphosphooctonate aldolase.